The primary structure comprises 944 residues: MDKILIRGARTHNLKNIDLTLPRDKLIVITGLSGSGKSSLAFDTLYAEGQRRYVESLSAYARQFLSMMEKPDVDTIEGLSPAISIEQKSTSHNPRSTVGTITEIYDYLRLLYARVGTPRCPDHDIPLEAQTISQMVDLVLERPEGSKLMLLAPVVRERKGEHLAVFDELRAQGFVRARVNGKLYELDELPKLDKQKKHSIDVVVDRFKVRADLQQRLAESFETALKLADGIALVAPMDDEQGEETIFSARFACPVCGHAISELEPKLFSFNNPAGACPTCDGLGVKQFFDTKRLVNTELTLAEGAIRGWDRRNVYYFQMLGSLAAHYGFSLEEPFGELSAEHQKVILQGSGKQSVDFKYLNDRGDIVKRSHPFEGIVPNLERRYRETESATVREELAKFLGTQPCPDCRGTRLRREARHVWVGEKTLPAVTNLPIGEASNYFGQLTLTGRRGEIAAKILKEICERLQFLVNVGLDYLTLDRSADTLSGGEAQRIRLASQIGAGLVGVMYILDEPSIGLHQRDNDRLLATLNHLRDLGNTVIVVEHDEDAIRLADYVVDIGPGAGVHGGQIVAEGSPQEVMDHPDSLTGKYLSGRKKIVVPAKRTPRNKKLQLKLKGARGNNLQNVDLEVPIGLLTCVTGVSGSGKSTLINNTLYPLAATALNGASSLEAAPHSSMDGLQHLDKVVDIDQSPIGRTPRSNPATYTGIFTPIRELFSGVPESRSRGYGPGRFSFNVKGGRCEACQGDGLIKVEMHFLPDIYVPCDVCKSKRYNRETLEIKYKGKNIHEVLEMTIEDAREFFDAVPALARKLQTLMDVGLSYIKLGQSATTLSGGEAQRVKLSRELSKRDTGKTLYILDEPTTGLHFADIQQLLDVLHRLRDHGNTVVVIEHNLDVIKTADWLVDLGPEGGSKGGQIIACGTPEELSEMKQSYTGHYLKPLLERDRA.

31-38 (GLSGSGKS) contributes to the ATP binding site. The C4-type zinc-finger motif lies at 253 to 280 (CPVCGHAISELEPKLFSFNNPAGACPTC). 2 ABC transporter domains span residues 309 to 586 (WDRR…PDSL) and 606 to 936 (RNKK…HYLK). 639–646 (GVSGSGKS) provides a ligand contact to ATP. A C4-type zinc finger spans residues 739-765 (CEACQGDGLIKVEMHFLPDIYVPCDVC).

Belongs to the ABC transporter superfamily. UvrA family. As to quaternary structure, forms a heterotetramer with UvrB during the search for lesions.

The protein localises to the cytoplasm. Functionally, the UvrABC repair system catalyzes the recognition and processing of DNA lesions. UvrA is an ATPase and a DNA-binding protein. A damage recognition complex composed of 2 UvrA and 2 UvrB subunits scans DNA for abnormalities. When the presence of a lesion has been verified by UvrB, the UvrA molecules dissociate. This chain is UvrABC system protein A, found in Pseudomonas putida (strain ATCC 47054 / DSM 6125 / CFBP 8728 / NCIMB 11950 / KT2440).